Reading from the N-terminus, the 33-residue chain is Photosystem II reaction center protein T (33 aa).

A helical membrane pass occupies residues 3–23 (ALVYTFLLVSTLGIIFFAIFF).

The protein belongs to the PsbT family. In terms of assembly, PSII is composed of 1 copy each of membrane proteins PsbA, PsbB, PsbC, PsbD, PsbE, PsbF, PsbH, PsbI, PsbJ, PsbK, PsbL, PsbM, PsbT, PsbY, PsbZ, Psb30/Ycf12, at least 3 peripheral proteins of the oxygen-evolving complex and a large number of cofactors. It forms dimeric complexes.

It localises to the plastid. The protein localises to the chloroplast thylakoid membrane. Its function is as follows. Found at the monomer-monomer interface of the photosystem II (PS II) dimer, plays a role in assembly and dimerization of PSII. PSII is a light-driven water plastoquinone oxidoreductase, using light energy to abstract electrons from H(2)O, generating a proton gradient subsequently used for ATP formation. This chain is Photosystem II reaction center protein T, found in Arabidopsis thaliana (Mouse-ear cress).